The sequence spans 103 residues: UPF0473 protein SSA_2239 (103 aa).

It belongs to the UPF0473 family.

The protein is UPF0473 protein SSA_2239 of Streptococcus sanguinis (strain SK36).